Here is a 333-residue protein sequence, read N- to C-terminus: GTP 3',8-cyclase (333 aa).

One can recognise a Radical SAM core domain in the interval 7-221 (KFGRVHDYIR…FEACNEAGYE (215 aa)). Arg16 contacts GTP. [4Fe-4S] cluster-binding residues include Cys23 and Cys27. An S-adenosyl-L-methionine-binding site is contributed by Tyr29. Position 30 (Cys30) interacts with [4Fe-4S] cluster. Arg66 is a binding site for GTP. Gly70 is an S-adenosyl-L-methionine binding site. Thr97 lines the GTP pocket. Ser121 provides a ligand contact to S-adenosyl-L-methionine. Position 158 (Lys158) interacts with GTP. Position 192 (Met192) interacts with S-adenosyl-L-methionine. Cys257 and Cys260 together coordinate [4Fe-4S] cluster. 262–264 (RLR) contributes to the GTP binding site. Cys274 is a binding site for [4Fe-4S] cluster.

This sequence belongs to the radical SAM superfamily. MoaA family. In terms of assembly, monomer and homodimer. Requires [4Fe-4S] cluster as cofactor.

It catalyses the reaction GTP + AH2 + S-adenosyl-L-methionine = (8S)-3',8-cyclo-7,8-dihydroguanosine 5'-triphosphate + 5'-deoxyadenosine + L-methionine + A + H(+). Its pathway is cofactor biosynthesis; molybdopterin biosynthesis. In terms of biological role, catalyzes the cyclization of GTP to (8S)-3',8-cyclo-7,8-dihydroguanosine 5'-triphosphate. This chain is GTP 3',8-cyclase, found in Listeria monocytogenes serovar 1/2a (strain ATCC BAA-679 / EGD-e).